A 215-amino-acid polypeptide reads, in one-letter code: NAD(P)H-hydrate epimerase (215 aa).

A YjeF N-terminal domain is found at 10-212 (SRELDDKTIN…DIGIYRGNAF (203 aa)). Residue 59 to 63 (NNGGD) coordinates (6S)-NADPHX. Residues asparagine 60 and aspartate 122 each contribute to the K(+) site. Residues 126–132 (GSGLSRN) and aspartate 155 contribute to the (6S)-NADPHX site. Serine 158 contributes to the K(+) binding site.

The protein belongs to the NnrE/AIBP family. It depends on K(+) as a cofactor.

The enzyme catalyses (6R)-NADHX = (6S)-NADHX. It carries out the reaction (6R)-NADPHX = (6S)-NADPHX. Functionally, catalyzes the epimerization of the S- and R-forms of NAD(P)HX, a damaged form of NAD(P)H that is a result of enzymatic or heat-dependent hydration. This is a prerequisite for the S-specific NAD(P)H-hydrate dehydratase to allow the repair of both epimers of NAD(P)HX. The sequence is that of NAD(P)H-hydrate epimerase from Lentilactobacillus buchneri (strain NRRL B-30929) (Lactobacillus buchneri).